Reading from the N-terminus, the 547-residue chain is Chaperonin GroEL (547 aa).

ATP-binding positions include Thr30–Pro33, Lys51, Asp87–Thr91, Gly415, Asn479–Ala481, and Asp495.

This sequence belongs to the chaperonin (HSP60) family. Forms a cylinder of 14 subunits composed of two heptameric rings stacked back-to-back. Interacts with the co-chaperonin GroES.

The protein localises to the cytoplasm. The enzyme catalyses ATP + H2O + a folded polypeptide = ADP + phosphate + an unfolded polypeptide.. In terms of biological role, together with its co-chaperonin GroES, plays an essential role in assisting protein folding. The GroEL-GroES system forms a nano-cage that allows encapsulation of the non-native substrate proteins and provides a physical environment optimized to promote and accelerate protein folding. The sequence is that of Chaperonin GroEL from Cupriavidus metallidurans (strain ATCC 43123 / DSM 2839 / NBRC 102507 / CH34) (Ralstonia metallidurans).